A 705-amino-acid chain; its full sequence is MEAIKKVFEQKKAQDATAFVAFVTAGYPKKEDTVPVLLALQAGGADIIELGIPFSDPIADGPVIQEANTVALKNDIDYPTVLGQIREARQQGLTAPVLLMGYYNPMLAYGEDKAIQDAAEAGANGFIMVDLPPEEAIAFRQKCAASNLSYVPLIAPSTTLKRIQFLASIADSFIYVVSKMGTTGSSANVAVNEELPTILSRIREYTHVPLAVEFGVATRDQFNYVADAGADGVVVIGSRIVNAIKAAGEGQVPQFVENYCREVSGKGEPSRVRSPGAAQRTPSQLTPNAETAKGVENILPARFGQFGGQYVPESLVDALAELEEAHKSAIEDPAFWEEVRSLYTYSNRPSNLYLAENLTKEAGGANIWLKREDLNHTGSHKINNALGQILLAKRIGKTRIIAETGAGQHGVATATVCAKFGLECVIYMGAEDVRRQALKLFRIEMLGGKAWVIPVHSGSCTLKDAVNEAMRDWVTNLSTTHYLVGSAIGPHPFPTIVRDFQKVIGEEIKAQLKEVRGKLPDVVVACVGGGSNAIGTFYDFIPDKSVRLVGVEAGGEGIDGHKHSATLSMGQPGVLHGVRTYILQDKAGQIIETHSISAGLDYPGVGPEHAWLKDSGRADYVVCTDEDALRGFRMLTQKEGIIPALESSHAIWEGVKIAKSLPKDKDIVICLSGRGDKDVEQISELLPKWADKLDWHVSSNAIPSK.

Residues 1–293 (MEAIKKVFEQ…QLTPNAETAK (293 aa)) form a tryptophan synthase alpha chain region. Residues glutamate 49 and aspartate 60 each act as proton acceptor in the active site. The interval 266–287 (KGEPSRVRSPGAAQRTPSQLTP) is disordered. The interval 294–705 (GVENILPARF…HVSSNAIPSK (412 aa)) is tryptophan synthase beta chain. An N6-(pyridoxal phosphate)lysine modification is found at lysine 381.

In the N-terminal section; belongs to the TrpA family. This sequence in the C-terminal section; belongs to the TrpB family. It depends on pyridoxal 5'-phosphate as a cofactor.

The enzyme catalyses (1S,2R)-1-C-(indol-3-yl)glycerol 3-phosphate + L-serine = D-glyceraldehyde 3-phosphate + L-tryptophan + H2O. The protein operates within amino-acid biosynthesis; L-tryptophan biosynthesis; L-tryptophan from chorismate: step 5/5. In Coprinopsis cinerea (Inky cap fungus), this protein is Tryptophan synthase (TRP-1).